We begin with the raw amino-acid sequence, 745 residues long: Cellulose synthase-like protein E2 (745 aa).

Residues 1 to 14 (MAGSGGGVVSGGRQ) are compositionally biased toward gly residues. Residues 1-20 (MAGSGGGVVSGGRQRGPPLF) form a disordered region. Helical transmembrane passes span 29-49 (AMAAYRVSAATVFAGVLLIWL) and 66-86 (WAWLGMLAAELWFGFYWVLTL). Active-site residues include Asp-155 and Asp-458. 5 consecutive transmembrane segments (helical) span residues 541–561 (FPTLYYVTIPSLCFLNGISLF), 568–588 (WFIPFAYVMVAAYSCSLAESL), 658–678 (AMFVILTTVALLNLACMVLGI), 686–706 (GPGGLETLFLQAVLCVLIVAI), and 723–743 (LPASVARVSICFVLPLCILSI).

Belongs to the glycosyltransferase 2 family. Plant cellulose synthase-like E subfamily.

It is found in the golgi apparatus membrane. Its function is as follows. Thought to be a Golgi-localized beta-glycan synthase that polymerize the backbones of noncellulosic polysaccharides (hemicelluloses) of plant cell wall. The polypeptide is Cellulose synthase-like protein E2 (CSLE2) (Oryza sativa subsp. japonica (Rice)).